Reading from the N-terminus, the 114-residue chain is Translation initiation factor 1A (114 aa).

The 73-residue stretch at 19 to 91 folds into the S1-like domain; sequence SEFRLPGEGE…EKGDIVHKYE (73 aa).

It belongs to the eIF-1A family.

Seems to be required for maximal rate of protein biosynthesis. Enhances ribosome dissociation into subunits and stabilizes the binding of the initiator Met-tRNA(I) to 40 S ribosomal subunits. In Pyrobaculum aerophilum (strain ATCC 51768 / DSM 7523 / JCM 9630 / CIP 104966 / NBRC 100827 / IM2), this protein is Translation initiation factor 1A (eIF1A).